A 785-amino-acid polypeptide reads, in one-letter code: Protein translocase subunit SecA 3 (785 aa).

ATP contacts are provided by residues Gln-98, 116 to 120 (GEGKT), and Asp-505.

This sequence belongs to the SecA family. In terms of assembly, monomer and homodimer. Part of the essential Sec protein translocation apparatus which comprises SecA, SecYEG and auxiliary proteins SecDF. Other proteins may also be involved.

It is found in the cell membrane. Its subcellular location is the cytoplasm. It carries out the reaction ATP + H2O + cellular proteinSide 1 = ADP + phosphate + cellular proteinSide 2.. Part of the Sec protein translocase complex. Interacts with the SecYEG preprotein conducting channel. Has a central role in coupling the hydrolysis of ATP to the transfer of proteins into and across the cell membrane, serving as an ATP-driven molecular motor driving the stepwise translocation of polypeptide chains across the membrane. In Mycolicibacterium vanbaalenii (strain DSM 7251 / JCM 13017 / BCRC 16820 / KCTC 9966 / NRRL B-24157 / PYR-1) (Mycobacterium vanbaalenii), this protein is Protein translocase subunit SecA 3.